We begin with the raw amino-acid sequence, 83 residues long: RNA-binding protein Hfq (83 aa).

The region spanning Asp-10–Ile-70 is the Sm domain.

The protein belongs to the Hfq family. As to quaternary structure, homohexamer.

In terms of biological role, RNA chaperone that binds small regulatory RNA (sRNAs) and mRNAs to facilitate mRNA translational regulation in response to envelope stress, environmental stress and changes in metabolite concentrations. Also binds with high specificity to tRNAs. In Desulfitobacterium hafniense (strain DSM 10664 / DCB-2), this protein is RNA-binding protein Hfq.